A 248-amino-acid chain; its full sequence is Small ribosomal subunit protein uS2 (248 aa).

It belongs to the universal ribosomal protein uS2 family.

In Alkalilimnicola ehrlichii (strain ATCC BAA-1101 / DSM 17681 / MLHE-1), this protein is Small ribosomal subunit protein uS2.